A 214-amino-acid polypeptide reads, in one-letter code: Ribonuclease T (214 aa).

The region spanning 20-195 (VVVDVETAGF…YDTQKTAELF (176 aa)) is the Exonuclease domain. Positions 23, 25, 182, and 187 each coordinate Mg(2+). His182 acts as the Proton donor/acceptor in catalysis.

It belongs to the RNase T family. Homodimer. The cofactor is Mg(2+).

Trims short 3' overhangs of a variety of RNA species, leaving a one or two nucleotide 3' overhang. Responsible for the end-turnover of tRNA: specifically removes the terminal AMP residue from uncharged tRNA (tRNA-C-C-A). Also appears to be involved in tRNA biosynthesis. This Vibrio parahaemolyticus serotype O3:K6 (strain RIMD 2210633) protein is Ribonuclease T.